Reading from the N-terminus, the 486-residue chain is Achaete-scute complex protein T8 (486 aa).

Disordered regions lie at residues 1–26 (MAAL…GIKT) and 75–158 (AAST…LPLP). The span at 75–86 (AASTTNTTPISS) shows a compositional bias: polar residues. One can recognise a bHLH domain in the interval 159 to 223 (QAVARRNARE…RMAVEYIRSL (65 aa)).

In terms of assembly, efficient DNA binding requires dimerization with another bHLH protein. L(1)SC, SC and AC strongly label the presumptive stomatogastric nervous system, while ASE is more prominent in the presumptive procephalic lobe.

Its function is as follows. Involved in the determination of the neuronal precursors of optic lobes in the central nervous system. In Drosophila melanogaster (Fruit fly), this protein is Achaete-scute complex protein T8 (ase).